We begin with the raw amino-acid sequence, 158 residues long: UPF0262 protein RSKD131_1985 (158 aa).

The protein belongs to the UPF0262 family.

This chain is UPF0262 protein RSKD131_1985, found in Cereibacter sphaeroides (strain KD131 / KCTC 12085) (Rhodobacter sphaeroides).